The chain runs to 184 residues: Ribosome-recycling factor (184 aa).

The protein belongs to the RRF family.

The protein resides in the cytoplasm. In terms of biological role, responsible for the release of ribosomes from messenger RNA at the termination of protein biosynthesis. May increase the efficiency of translation by recycling ribosomes from one round of translation to another. In Leptospira borgpetersenii serovar Hardjo-bovis (strain JB197), this protein is Ribosome-recycling factor.